Consider the following 260-residue polypeptide: 3'-5' ssDNA/RNA exonuclease TatD (260 aa).

Residues glutamate 91, histidine 127, and histidine 152 each contribute to the a divalent metal cation site.

Belongs to the metallo-dependent hydrolases superfamily. TatD-type hydrolase family. TatD subfamily. Monomer. It depends on Mg(2+) as a cofactor.

Its subcellular location is the cytoplasm. 3'-5' exonuclease that prefers single-stranded DNA and RNA. May play a role in the H(2)O(2)-induced DNA damage repair. The protein is 3'-5' ssDNA/RNA exonuclease TatD of Shigella flexneri serotype 5b (strain 8401).